Consider the following 330-residue polypeptide: AH receptor-interacting protein (330 aa).

Residues 31 to 121 enclose the PPIase FKBP-type domain; sequence GTKATFHYRT…KDPLEGQRHC (91 aa). The residue at position 43 (Ser-43) is a Phosphoserine. 3 TPR repeats span residues 179–212, 231–264, and 265–298; these read VPLI…LKNL, TPLL…YDDN, and VKAY…DPAL.

As to quaternary structure, interacts with RET in the pituitary gland; this interaction prevents the formation of the AIP-survivin complex. In terms of tissue distribution, widely expressed. Higher levels seen in the heart, placenta and skeletal muscle. Not expressed in the liver.

It is found in the cytoplasm. Its function is as follows. May play a positive role in AHR-mediated (aromatic hydrocarbon receptor) signaling, possibly by influencing its receptivity for ligand and/or its nuclear targeting. In terms of biological role, cellular negative regulator of the hepatitis B virus (HBV) X protein. The protein is AH receptor-interacting protein (AIP) of Homo sapiens (Human).